The following is a 162-amino-acid chain: Interleukin-15 (162 aa).

An N-terminal signal peptide occupies residues 1 to 29 (MRISKPHLRSISIQCYLCLLLNSHFLTEA). A propeptide spanning residues 30-48 (GIHVFILGCFSAGLPKTEA) is cleaved from the precursor. 2 disulfide bridges follow: Cys-83-Cys-133 and Cys-90-Cys-136. Asn-127 carries N-linked (GlcNAc...) asparagine glycosylation.

This sequence belongs to the IL-15/IL-21 family. In terms of tissue distribution, most abundant in placenta and skeletal muscle. It is also detected in the heart, lung, liver and kidney. IL15-S21AA is preferentially expressed in tissues such as testis and thymus.

It is found in the secreted. Its subcellular location is the cytoplasm. It localises to the nucleus. Its function is as follows. Cytokine that plays a major role in the development of inflammatory and protective immune responses to microbial invaders and parasites by modulating immune cells of both the innate and adaptive immune systems. Stimulates the proliferation of natural killer cells, T-cells and B-cells and promotes the secretion of several cytokines. In monocytes, induces the production of IL8 and monocyte chemotactic protein 1/CCL2, two chemokines that attract neutrophils and monocytes respectively to sites of infection. Unlike most cytokines, which are secreted in soluble form, IL15 is expressed in association with its high affinity IL15RA on the surface of IL15-producing cells and delivers signals to target cells that express IL2RB and IL2RG receptor subunits. Binding to its receptor triggers the phosphorylation of JAK1 and JAK3 and the recruitment and subsequent phosphorylation of signal transducer and activator of transcription-3/STAT3 and STAT5. In mast cells, induces the rapid tyrosine phosphorylation of STAT6 and thereby controls mast cell survival and release of cytokines such as IL4. The polypeptide is Interleukin-15 (IL15) (Homo sapiens (Human)).